Consider the following 473-residue polypeptide: Photosystem II CP43 reaction center protein (473 aa).

Residues 1–14 constitute a propeptide that is removed on maturation; it reads MKTLYSLRRFYPVE. Thr15 carries the N-acetylthreonine modification. Thr15 bears the Phosphothreonine mark. 5 consecutive transmembrane segments (helical) span residues 69–93, 134–155, 178–200, 255–275, and 291–312; these read LFEVAHFVPEKPMYEQGLILLPHLA, LLGPETLEESFPFFGYVWKDRN, KALYFGGVYDTWAPGGGDVRKIT, KPFAWARRAFVWSGEAYLSYS, and WFNNTAYPSEFYGPTGPEASQA. Residue Glu367 coordinates [CaMn4O5] cluster. Residues 447 to 471 traverse the membrane as a helical segment; sequence RARAAAAGFEKGIDRDFEPVLSMTP.

The protein belongs to the PsbB/PsbC family. PsbC subfamily. PSII is composed of 1 copy each of membrane proteins PsbA, PsbB, PsbC, PsbD, PsbE, PsbF, PsbH, PsbI, PsbJ, PsbK, PsbL, PsbM, PsbT, PsbX, PsbY, PsbZ, Psb30/Ycf12, at least 3 peripheral proteins of the oxygen-evolving complex and a large number of cofactors. It forms dimeric complexes. The cofactor is Binds multiple chlorophylls and provides some of the ligands for the Ca-4Mn-5O cluster of the oxygen-evolving complex. It may also provide a ligand for a Cl- that is required for oxygen evolution. PSII binds additional chlorophylls, carotenoids and specific lipids..

The protein localises to the plastid. Its subcellular location is the chloroplast thylakoid membrane. One of the components of the core complex of photosystem II (PSII). It binds chlorophyll and helps catalyze the primary light-induced photochemical processes of PSII. PSII is a light-driven water:plastoquinone oxidoreductase, using light energy to abstract electrons from H(2)O, generating O(2) and a proton gradient subsequently used for ATP formation. This chain is Photosystem II CP43 reaction center protein, found in Drimys granadensis.